Reading from the N-terminus, the 216-residue chain is Sperm microtubule inner protein 8 (216 aa).

As to quaternary structure, microtubule inner protein component of sperm flagellar doublet microtubules. In terms of tissue distribution, expressed in testis.

The protein resides in the cytoplasm. It is found in the cytoskeleton. The protein localises to the flagellum axoneme. Microtubule inner protein (MIP) part of the dynein-decorated doublet microtubules (DMTs) in flagellum axoneme. May serve to reinforce and thus stabilize the microtubule structure in the sperm flagella. This is Sperm microtubule inner protein 8 (Spmip8) from Mus musculus (Mouse).